A 423-amino-acid polypeptide reads, in one-letter code: Elongation factor 1-alpha (423 aa).

Positions K5–V221 constitute a tr-type G domain. Residues G14 to S21 form a G1 region. G14–S21 contacts GTP. A Mg(2+)-binding site is contributed by S21. Residues G70–D74 form a G2 region. A G3 region spans residues D91–G94. Residues D91–H95 and N146–D149 each bind GTP. The interval N146–D149 is G4. The G5 stretch occupies residues S185–Y187.

This sequence belongs to the TRAFAC class translation factor GTPase superfamily. Classic translation factor GTPase family. EF-Tu/EF-1A subfamily.

Its subcellular location is the cytoplasm. The enzyme catalyses GTP + H2O = GDP + phosphate + H(+). GTP hydrolase that promotes the GTP-dependent binding of aminoacyl-tRNA to the A-site of ribosomes during protein biosynthesis. This is Elongation factor 1-alpha from Archaeoglobus fulgidus (strain ATCC 49558 / DSM 4304 / JCM 9628 / NBRC 100126 / VC-16).